We begin with the raw amino-acid sequence, 437 residues long: 5-hydroxytryptamine receptor 3B (437 aa).

The first 21 residues, 1-21 (MILLWSCLLVAVVGILGTATP), serve as a signal peptide directing secretion. Over 22–235 (QPGNSSLHRL…RFNVVIRRCP (214 aa)) the chain is Extracellular. 3 N-linked (GlcNAc...) asparagine glycosylation sites follow: asparagine 25, asparagine 92, and asparagine 134. A disulfide bridge links cysteine 151 with cysteine 165. Residues 236 to 255 (LAYVVSLLIPSIFLMLVDLG) traverse the membrane as a helical segment. Residues 256–266 (SFYLPPNCRAR) lie on the Cytoplasmic side of the membrane. Residues 267–284 (IVFKTNVLVGYTVFRVNM) traverse the membrane as a helical segment. The Extracellular portion of the chain corresponds to 285–295 (SDEVPRSAGCT). The chain crosses the membrane as a helical span at residues 296-324 (SLIGVFFTVCMALLVLSLSKSILLIKFLY). Residues 325-410 (EERHSEQERP…WLAILCHFDQ (86 aa)) are Cytoplasmic-facing. The HA-stretch; determines single-channel conductance in 5-HT3 receptors stretch occupies residues 377–409 (FWFQLQSINNSLRTRDQVYQKEVEWLAILCHFD). The helical transmembrane segment at 411–434 (LLFRIYLAVLGLYTVTLCSLWALW) threads the bilayer. Residues 435–437 (SRM) lie on the Extracellular side of the membrane.

Belongs to the ligand-gated ion channel (TC 1.A.9) family. 5-hydroxytryptamine receptor (TC 1.A.9.2) subfamily. HTR3B sub-subfamily. As to quaternary structure, forms homopentameric as well as heteropentameric serotonin-activated cation-selective channel complexes with HTR3A. The homomeric complex is not functional. Heteropentameric complexes display properties which resemble that of neuronal serotonin-activated channels in vivo. In terms of processing, N-glycosylation is required for membrane localization. Expressed in peripheral neurons, but not in neurons of the central nervous system.

The protein resides in the postsynaptic cell membrane. It localises to the cell membrane. The catalysed reaction is Na(+)(in) = Na(+)(out). The enzyme catalyses K(+)(in) = K(+)(out). It carries out the reaction Ca(2+)(in) = Ca(2+)(out). Forms serotonin (5-hydroxytryptamine/5-HT3)-activated cation-selective channel complexes, which when activated cause fast, depolarizing responses in neurons. The sequence is that of 5-hydroxytryptamine receptor 3B from Rattus norvegicus (Rat).